A 2195-amino-acid chain; its full sequence is Integrator complex subunit 1 (2195 aa).

Residues 1–86 (MNRAKPTTVR…RPKLSSTPPL (86 aa)) are disordered. The residue at position 13 (serine 13) is a Phosphoserine. Residues 34 to 45 (GQASESKTTSTL) are compositionally biased toward polar residues. Residue lysine 47 is modified to N6-acetyllysine. A compositionally biased stretch (low complexity) spans 62–75 (SASLSGTSALTGLT). Position 83 is a phosphothreonine (threonine 83). A Phosphoserine modification is found at serine 87. The interval 267-297 (LLQGEGARSGGELGAGSSPHPSLTEEEDSQT) is disordered. Phosphoserine occurs at positions 307 and 926. Positions 923–947 (STASGEEDDEGESREQKAKKRQRQQ) are disordered. A helical membrane pass occupies residues 1165–1185 (HILVVHAMVILLTLGPPRSGD). The interval 1313–1347 (SLPPRRDSTEAPKPESSPEPPPGQGRTRAGTQVPV) is disordered. Basic and acidic residues predominate over residues 1316-1325 (PRRDSTEAPK). Phosphoserine is present on residues serine 1320, serine 1328, and serine 1329.

This sequence belongs to the Integrator subunit 1 family. As to quaternary structure, component of the Integrator complex, composed of core subunits INTS1, INTS2, INTS3, INTS4, INTS5, INTS6, INTS7, INTS8, INTS9/RC74, INTS10, INTS11/CPSF3L, INTS12, INTS13, INTS14 and INTS15. The core complex associates with protein phosphatase 2A subunits PPP2CA and PPP2R1A, to form the Integrator-PP2A (INTAC) complex. Interacts with ESRRB, ESRRB is not a core component of the Integrator complex and this association is a bridge for the interaction with the multiprotein complex Integrator; attracts the transcriptional machinery.

It localises to the nucleus. It is found in the nucleus membrane. Component of the integrator complex, a multiprotein complex that terminates RNA polymerase II (Pol II) transcription in the promoter-proximal region of genes. The integrator complex provides a quality checkpoint during transcription elongation by driving premature transcription termination of transcripts that are unfavorably configured for transcriptional elongation: the complex terminates transcription by (1) catalyzing dephosphorylation of the C-terminal domain (CTD) of Pol II subunit POLR2A/RPB1 and SUPT5H/SPT5, (2) degrading the exiting nascent RNA transcript via endonuclease activity and (3) promoting the release of Pol II from bound DNA. The integrator complex is also involved in terminating the synthesis of non-coding Pol II transcripts, such as enhancer RNAs (eRNAs), small nuclear RNAs (snRNAs), telomerase RNAs and long non-coding RNAs (lncRNAs). Within the integrator complex, INTS1 is involved in the post-termination step: INTS1 displaces INTS3 and the SOSS factors, allowing the integrator complex to return to the closed conformation, ready to bind to the paused elongation complex for another termination cycle. Mediates recruitment of cytoplasmic dynein to the nuclear envelope, probably as component of the integrator complex. In Mus musculus (Mouse), this protein is Integrator complex subunit 1.